Consider the following 242-residue polypeptide: Probable transcriptional regulatory protein MHP7448_0474 (242 aa).

The protein belongs to the TACO1 family.

It is found in the cytoplasm. The chain is Probable transcriptional regulatory protein MHP7448_0474 from Mesomycoplasma hyopneumoniae (strain 7448) (Mycoplasma hyopneumoniae).